Here is a 348-residue protein sequence, read N- to C-terminus: Protein RecA (348 aa).

67-74 (GPESSGKT) contributes to the ATP binding site.

It belongs to the RecA family.

The protein localises to the cytoplasm. Can catalyze the hydrolysis of ATP in the presence of single-stranded DNA, the ATP-dependent uptake of single-stranded DNA by duplex DNA, and the ATP-dependent hybridization of homologous single-stranded DNAs. It interacts with LexA causing its activation and leading to its autocatalytic cleavage. The protein is Protein RecA of Clostridioides difficile (strain 630) (Peptoclostridium difficile).